Consider the following 360-residue polypeptide: Chorismate synthase (360 aa).

Position 47 (R47) interacts with NADP(+). Residues 124 to 126 (RSS), 240 to 241 (NA), G285, 300 to 304 (KPVAT), and R326 each bind FMN.

It belongs to the chorismate synthase family. As to quaternary structure, homotetramer. FMNH2 is required as a cofactor.

It catalyses the reaction 5-O-(1-carboxyvinyl)-3-phosphoshikimate = chorismate + phosphate. Its pathway is metabolic intermediate biosynthesis; chorismate biosynthesis; chorismate from D-erythrose 4-phosphate and phosphoenolpyruvate: step 7/7. Functionally, catalyzes the anti-1,4-elimination of the C-3 phosphate and the C-6 proR hydrogen from 5-enolpyruvylshikimate-3-phosphate (EPSP) to yield chorismate, which is the branch point compound that serves as the starting substrate for the three terminal pathways of aromatic amino acid biosynthesis. This reaction introduces a second double bond into the aromatic ring system. The chain is Chorismate synthase from Cytophaga hutchinsonii (strain ATCC 33406 / DSM 1761 / CIP 103989 / NBRC 15051 / NCIMB 9469 / D465).